A 505-amino-acid polypeptide reads, in one-letter code: Maturase K (505 aa).

Belongs to the intron maturase 2 family. MatK subfamily.

The protein localises to the plastid. The protein resides in the chloroplast. Its function is as follows. Usually encoded in the trnK tRNA gene intron. Probably assists in splicing its own and other chloroplast group II introns. The protein is Maturase K of Apocynum androsaemifolium (Spreading dogbane).